The sequence spans 415 residues: MRVSLFLQKQIIECSKAFQPHSTRLQWPKSQDKVFVAMSGGVDSSFSAYLLKSQGYNVEGVFMRNWLDEDSAPSGCPAERDWATVQKVCKKLNISCRRFNFEKEYWNLVFEPSLDLYENGLTPNPDVSCNRQVKFGALFDALKKHCENNVKGDWWLASGHYAKSVVNIETNESHMCIPTDKRKDQTLFLCTIRKEALEKTIFPLHNWTKENVKKQASSAGFKEIAEKQESQGLCFVSPNVGRKFRKFLQRYLNFSDRPIKVIAGKNVVGEFSGNHGIWSLTVGERCGLSLPQAQSEYFGRWYVWKKDIKNNALYICRGTNNELLMSKCIYLKDWKWCGTKLQNLEKSALSCFVRVRHQQPLQPAKVTWRNPESVKIHFQDKQRAVTPGQVIAVYVNDVCLGGGMVDTVEPEKDFD.

Residues 37–44 (AMSGGVDS) and methionine 63 each bind ATP. Positions 124-126 (NPD) are interaction with target base in tRNA. Cysteine 129 serves as the catalytic Nucleophile. Cysteine 129 and cysteine 234 are joined by a disulfide. Glycine 159 is a binding site for ATP. Residues 183 to 185 (KDQ) are interaction with tRNA. The Cysteine persulfide intermediate role is filled by cysteine 234. An interaction with tRNA region spans residues 356–357 (RH).

It belongs to the MnmA/TRMU family.

It is found in the mitochondrion. The enzyme catalyses 5-taurinomethyluridine(34) in tRNA + S-sulfanyl-L-cysteinyl-[protein] + AH2 + ATP = 5-taurinomethyl-2-thiouridine(34) in tRNA + L-cysteinyl-[protein] + A + AMP + diphosphate + H(+). Its function is as follows. Catalyzes the 2-thiolation of uridine at the wobble position (U34) of mitochondrial tRNA(Lys), tRNA(Glu) and tRNA(Gln). Required for the formation of 5-taurinomethyl-2-thiouridine (tm5s2U) of mitochondrial tRNA(Lys), tRNA(Glu), and tRNA(Gln) at the wobble position. ATP is required to activate the C2 atom of the wobble base. The sequence is that of Mitochondrial tRNA-specific 2-thiouridylase 1 from Schizosaccharomyces pombe (strain 972 / ATCC 24843) (Fission yeast).